A 257-amino-acid polypeptide reads, in one-letter code: Major prion protein (257 aa).

An N-terminal signal peptide occupies residues 1-24; that stretch reads MVKSHIGSWLLVLFVATWSDIGFC. An interaction with ADGRG6 region spans residues 25 to 41; sequence KKRPKPGGGWNTGGSRY. Residues 25-234 form an interaction with GRB2, ERI3 and SYN1 region; that stretch reads KKRPKPGGGW…ESEAYYQRGA (210 aa). The tract at residues 27-114 is disordered; it reads RPKPGGGWNT…KPSKPKTNMK (88 aa). Repeat copies occupy residues 54-62, 63-70, 71-78, 79-86, and 87-95. The tract at residues 54 to 95 is 5 X 8 AA tandem repeats of P-H-G-G-G-W-G-Q; that stretch reads PQGGGGWGQPHGGGWGQPHGGGWGQPHGGGWGQPHGGGGWGQ. Gly residues predominate over residues 55-101; that stretch reads QGGGGWGQPHGGGWGQPHGGGWGQPHGGGWGQPHGGGGWGQGGGSHG. Cu(2+)-binding residues include His64, Gly65, Gly66, His72, Gly73, Gly74, His80, Gly81, Gly82, His88, Gly90, and Gly91. A disulfide bond links Cys183 and Cys218. Asn185 and Asn201 each carry an N-linked (GlcNAc...) asparagine glycan. The GPI-anchor amidated alanine moiety is linked to residue Ala234. The propeptide at 235–257 is removed in mature form; sequence SAILFSPPPVILLISLLILLIVG.

It belongs to the prion family. Monomer and homodimer. Has a tendency to aggregate into amyloid fibrils containing a cross-beta spine, formed by a steric zipper of superposed beta-strands. Soluble oligomers may represent an intermediate stage on the path to fibril formation. Copper binding may promote oligomerization. Interacts with GRB2, APP, ERI3/PRNPIP and SYN1. Mislocalized cytosolically exposed PrP interacts with MGRN1; this interaction alters MGRN1 subcellular location and causes lysosomal enlargement. Interacts with APP. Interacts with KIAA1191. Interacts with ADGRG6.

The protein resides in the cell membrane. Its subcellular location is the golgi apparatus. Functionally, its primary physiological function is unclear. May play a role in neuronal development and synaptic plasticity. May be required for neuronal myelin sheath maintenance. May promote myelin homeostasis through acting as an agonist for ADGRG6 receptor. May play a role in iron uptake and iron homeostasis. Soluble oligomers are toxic to cultured neuroblastoma cells and induce apoptosis (in vitro). Association with GPC1 (via its heparan sulfate chains) targets PRNP to lipid rafts. Also provides Cu(2+) or Zn(2+) for the ascorbate-mediated GPC1 deaminase degradation of its heparan sulfate side chains. The sequence is that of Major prion protein (PRNP) from Neovison vison (American mink).